The primary structure comprises 316 residues: Transcription initiation factor IIB (316 aa).

The segment at 11–42 (PRVTCPNHPDAILVEDYRAGDMICPECGLVVG) adopts a TFIIB-type zinc-finger fold. Cys15, His18, Cys34, and Cys37 together coordinate Zn(2+). Residues Ser70, Ser76, and Ser92 each carry the phosphoserine modification. Repeat copies occupy residues 124–200 (MADR…LILK) and 218–294 (FCSN…LIYP). Residues Lys152, Arg154, Lys189, and Lys196 each contribute to the DNA site. A core promoter DNA-binding region spans residues 189 to 193 (KEIGR). Lys238 is modified (N6-acetyllysine; by autocatalysis). Residues 244-316 (LVPGRSPISV…DTPVDKLPQL (73 aa)) form a necessary for TATA box-bound TBP complex formation region. Arg248 lines the DNA pocket. The interval 249–252 (SPIS) is core promoter DNA-binding. DNA-binding residues include Lys272, Ala281, Thr284, Arg286, and Arg290. The interval 283–286 (VTIR) is core promoter DNA-binding.

Belongs to the TFIIB family. As to quaternary structure, found in a ternary complex with TATA box-bound TBP. Part of a TFIID-containing RNA polymerase II pre-initiation complex (PIC) that is composed of TBP and at least GTF2A1, GTF2A2, GTF2E1, GTF2E2, GTF2F1, GTF2H2, GTF2H3, GTF2H4, GTF2H5, GTF2B, TCEA1, ERCC2, ERCC3, TAF1, TAF2, TAF3, TAF4, TAF5, TAF6, TAF7, TAF8, TAF9, TAF10, TAF11, TAF12 and TAF13. Associates with TFIID-TFIIA (DA complex) to form TFIID-TFIIA-TFIIB (DAB complex), which is then recognized by RNA polymerase II (Pol II). Found in a RNA polymerase II initiation complex. Interacts (via C-terminus) with TBP; this interaction with TATA box-bound TBP guides Pol II into the PIC. Interacts (via N-terminus) with Pol II. Interacts (via C-terminus) with SSU72; this interaction is inhibited by SYMPK. Interacts with NR2F1; this interaction is direct. Interacts with PGR. Interacts with ESR1. Interacts with GTF2F1 (via C-terminus and preferentially via acetylated form); this interaction prevents binding of GTF2B to GTF2F2. Interacts with GTF2F2 (via N-terminus); this interaction is inhibited in presence of GTF2F1. Interacts with the transcription elongation factor TCEA2. Interacts with HSF1 (via transactivation domain). Interacts with GPBP1. In terms of processing, acetylated. Autoacetylated; autoacetylation at Lys-238 stimulates transcription activation.

It localises to the nucleus. The protein localises to the chromosome. The catalysed reaction is L-lysyl-[protein] + acetyl-CoA = N(6)-acetyl-L-lysyl-[protein] + CoA + H(+). In terms of biological role, general transcription factor that plays a role in transcription initiation by RNA polymerase II (Pol II). Involved in the pre-initiation complex (PIC) formation and Pol II recruitment at promoter DNA. Together with the TATA box-bound TBP forms the core initiation complex and provides a bridge between TBP and the Pol II-TFIIF complex. Released from the PIC early following the onset of transcription during the initiation and elongation transition and reassociates with TBP during the next transcription cycle. Associates with chromatin to core promoter-specific regions. Binds to two distinct DNA core promoter consensus sequence elements in a TBP-independent manner; these IIB-recognition elements (BREs) are localized immediately upstream (BREu), 5'-[GC][GC][GA]CGCC-3', and downstream (BREd), 5'-[GA]T[TGA][TG][GT][TG][TG]-3', of the TATA box element. Modulates transcription start site selection. Also exhibits autoacetyltransferase activity that contributes to the activated transcription. This is Transcription initiation factor IIB from Mus musculus (Mouse).